A 379-amino-acid chain; its full sequence is Alpha-humulene synthase eupE (379 aa).

Belongs to the terpene synthase family. Alpha-humulene synthase eupE subfamily. It depends on Mg(2+) as a cofactor.

It carries out the reaction (2E,6E)-farnesyl diphosphate = alpha-humulene + diphosphate. It participates in secondary metabolite biosynthesis; terpenoid biosynthesis. Its function is as follows. Alpha-humulene synthase; part of the gene cluster that mediates the biosynthesis of eupenifeldin, a bistropolone meroterpenoid that acts as an antitumor agent. The first step of eupenifeldin biosynthesis is the biosynthesis of 3-methylorcinaldehyde performed by the non-reducing polyketide synthase eupA. Oxidative dearomatization of 3-methylorcinaldehyde likely catalyzed by the FAD-dependent monooxygenase eupB is followed by oxidative ring expansion by the 2-oxoglutarate-dependent dioxygenase eupC to provide the first tropolone metabolite, tropolone stipitaldehyde. In parallel, generation of sesquiterpene alpha-humulene from farnesylpyrophosphate (FPP) is catalyzed by the terpene cyclase eupE. The cytochrome P450 monooxygenase eupD then hydroxylates humulene to humulenol. The putative Diels-Alderase eupF probably catalyzes the formation of the tropolone-humulene skeleton by linking humulenol and the polyketide moiety. The short-chain dehydrogenase/reductase eupG and the flavin-dependent monooxygenase eupH are also essential for eupenifeldin biosynthesis and are likely the additional decorating enzymes of the tropolone-humulene skeleton to produce final eupenifeldin or derivatives. In Phoma sp, this protein is Alpha-humulene synthase eupE.